Here is a 513-residue protein sequence, read N- to C-terminus: Ferulic acid decarboxylase 1 (513 aa).

3 residues coordinate Mn(2+): N174, H197, and E240. Prenylated FMN-binding positions include 174-179, 196-197, and E240; these read NWSIAR and QH. Catalysis depends on E289, which acts as the Proton donor. K405 serves as a coordination point for prenylated FMN.

The protein belongs to the UbiD family. UbiD-like/FDC subfamily. Homodimer. May form higher order oligomers. It depends on Mn(2+) as a cofactor. Prenylated FMN serves as cofactor.

Its subcellular location is the cytoplasm. It carries out the reaction (E)-4-coumarate + H(+) = 4-vinylphenol + CO2. The catalysed reaction is (E)-cinnamate + H(+) = styrene + CO2. The enzyme catalyses (E)-ferulate + H(+) = 2-methoxy-4-vinylphenol + CO2. Its function is as follows. Catalyzes the reversible decarboxylation of aromatic carboxylic acids like ferulic acid, p-coumaric acid or cinnamic acid, producing the corresponding vinyl derivatives 4-vinylphenol, 4-vinylguaiacol, and styrene, respectively, which play the role of aroma metabolites. The sequence is that of Ferulic acid decarboxylase 1 from Candida dubliniensis (strain CD36 / ATCC MYA-646 / CBS 7987 / NCPF 3949 / NRRL Y-17841) (Yeast).